Reading from the N-terminus, the 193-residue chain is tRNA(Phe) 7-((3-amino-3-carboxypropyl)-4-demethylwyosine(37)-N(4))-methyltransferase (193 aa).

This sequence belongs to the TYW3 family.

It catalyses the reaction 4-demethyl-7-[(3S)-3-amino-3-carboxypropyl]wyosine(37) in tRNA(Phe) + S-adenosyl-L-methionine = 7-[(3S)-3-amino-3-carboxypropyl]wyosine(37) in tRNA(Phe) + S-adenosyl-L-homocysteine + H(+). Its function is as follows. S-adenosyl-L-methionine-dependent methyltransferase that acts as a component of the wyosine derivatives biosynthesis pathway. Probably methylates N-4 position of wybutosine-86 to produce wybutosine-72. This chain is tRNA(Phe) 7-((3-amino-3-carboxypropyl)-4-demethylwyosine(37)-N(4))-methyltransferase, found in Methanocaldococcus jannaschii (strain ATCC 43067 / DSM 2661 / JAL-1 / JCM 10045 / NBRC 100440) (Methanococcus jannaschii).